The chain runs to 246 residues: Myelin-oligodendrocyte glycoprotein (246 aa).

A signal peptide spans 1 to 28; it reads MASLLSSSLPSCLPSLLFLLLQLTSSSA. Residues 29 to 144 form the Ig-like V-type domain; that stretch reads GQFRVIGPGH…EEAAMELKVE (116 aa). The Extracellular portion of the chain corresponds to 29 to 153; it reads GQFRVIGPGH…EDPFYWINPG (125 aa). A disulfide bridge connects residues C52 and C126. Residue N59 is glycosylated (N-linked (GlcNAc...) asparagine). The chain crosses the membrane as a helical span at residues 154-174; it reads VLVLIAVLPVLLLQITVGLVF. At 175–209 the chain is on the cytoplasmic side; that stretch reads LCLQRRLRGKLWAEIENLHRTFDPHFLMVPCWKIT. A helical membrane pass occupies residues 210–230; the sequence is LFVIVPVLGPLVALIICYNWL. Residues 231–246 are Extracellular-facing; it reads HRRLAGQFLEELRNPF.

The protein belongs to the immunoglobulin superfamily. BTN/MOG family. In terms of assembly, homodimer. In terms of tissue distribution, found exclusively in the CNS, where it is localized on the surface of myelin and oligodendrocyte cytoplasmic membranes.

The protein resides in the membrane. Its function is as follows. Mediates homophilic cell-cell adhesion. Minor component of the myelin sheath. May be involved in completion and/or maintenance of the myelin sheath and in cell-cell communication. The chain is Myelin-oligodendrocyte glycoprotein (MOG) from Bos taurus (Bovine).